We begin with the raw amino-acid sequence, 252 residues long: Glycerol-3-phosphate acyltransferase (252 aa).

Helical transmembrane passes span 6 to 26 (SVAM…YLIG), 66 to 86 (ILTL…TYII), 104 to 124 (AILV…PIFF), 140 to 160 (ITID…ILLI), 164 to 184 (MSLS…IPGI), and 204 to 224 (VIKG…ILIY).

Belongs to the PlsY family. In terms of assembly, probably interacts with PlsX.

The protein resides in the cell membrane. The catalysed reaction is an acyl phosphate + sn-glycerol 3-phosphate = a 1-acyl-sn-glycero-3-phosphate + phosphate. It functions in the pathway lipid metabolism; phospholipid metabolism. Its function is as follows. Catalyzes the transfer of an acyl group from acyl-phosphate (acyl-PO(4)) to glycerol-3-phosphate (G3P) to form lysophosphatidic acid (LPA). This enzyme utilizes acyl-phosphate as fatty acyl donor, but not acyl-CoA or acyl-ACP. This Ureaplasma urealyticum serovar 10 (strain ATCC 33699 / Western) protein is Glycerol-3-phosphate acyltransferase.